A 481-amino-acid polypeptide reads, in one-letter code: Proline--tRNA ligase (481 aa).

The protein belongs to the class-II aminoacyl-tRNA synthetase family. ProS type 3 subfamily. Homodimer.

It is found in the cytoplasm. The catalysed reaction is tRNA(Pro) + L-proline + ATP = L-prolyl-tRNA(Pro) + AMP + diphosphate. Functionally, catalyzes the attachment of proline to tRNA(Pro) in a two-step reaction: proline is first activated by ATP to form Pro-AMP and then transferred to the acceptor end of tRNA(Pro). Can inadvertently accommodate and process cysteine. Misacylated Cys-tRNA(Pro) is not edited by ProRS; this function may be provided by ProX. This Acetoanaerobium sticklandii (strain ATCC 12662 / DSM 519 / JCM 1433 / CCUG 9281 / NCIMB 10654 / HF) (Clostridium sticklandii) protein is Proline--tRNA ligase (proS).